The sequence spans 212 residues: Urease accessory protein UreG 2 (212 aa).

11–18 serves as a coordination point for GTP; it reads GPVGSGKM.

The protein belongs to the SIMIBI class G3E GTPase family. UreG subfamily. As to quaternary structure, homodimer. UreD, UreF and UreG form a complex that acts as a GTP-hydrolysis-dependent molecular chaperone, activating the urease apoprotein by helping to assemble the nickel containing metallocenter of UreC. The UreE protein probably delivers the nickel.

It is found in the cytoplasm. Its function is as follows. Facilitates the functional incorporation of the urease nickel metallocenter. This process requires GTP hydrolysis, probably effectuated by UreG. In terms of biological role, disrupting the ure2 operon has no effect on urease activity, or pathogen survival in BALB/c mice when inoculated by gavage, but confers slightly enhanced resistance to low pH killing in vitro. The chain is Urease accessory protein UreG 2 from Brucella suis biovar 1 (strain 1330).